The primary structure comprises 583 residues: Inactive tyrosine-protein kinase RYK (583 aa).

Positions 1-18 (MILRYLIFFAQLWALCLA) are cleaved as a signal peptide. Residues 19-173 (NVNMFISKEE…EVDDTDSIDK (155 aa)) are Extracellular-facing. The WIF domain occupies 22–147 (MFISKEEMNR…KVKLRQEKIC (126 aa)). 2 N-linked (GlcNAc...) asparagine glycosylation sites follow: Asn30 and Asn46. Cysteines 113 and 147 form a disulfide. The chain crosses the membrane as a helical span at residues 174-194 (AFFVIICIAAAFLLIVAATLI). The Cytoplasmic portion of the chain corresponds to 195–583 (CYFKRSKKED…DFNIQLSQYI (389 aa)). A Protein kinase domain is found at 281–583 (FQSLPLDMEG…DFNIQLSQYI (303 aa)). ATP is bound by residues 287–295 (DMEGTFGEV) and Lys327.

It belongs to the protein kinase superfamily. Tyr protein kinase family.

The protein resides in the cell membrane. It localises to the basolateral cell membrane. Has no detectable kinase activity in vitro and is unlikely to function as a tyrosine kinase in vivo. Receptor which may act as a receptor for Wnt ligand mom-2. Plays a role in controlling P7.p vulva precursor cell lineage orientation during vulva development. Regulates pop-1 asymmetric distribution in P7.p and its daughter cells. Plays a role in the migration of ALM neurons during embryogenesis. In Caenorhabditis elegans, this protein is Inactive tyrosine-protein kinase RYK.